The chain runs to 361 residues: Adenosine kinase (361 aa).

The short motif at proline 7 to glutamate 15 is the Nuclear localization signal element. Position 34 (aspartate 34) interacts with adenosine. Mg(2+) is bound at residue serine 48. Tyrosine 76 is subject to Phosphotyrosine. Residue asparagine 147 coordinates Mg(2+). Position 305 (glutamine 305) interacts with adenosine. The active site involves aspartate 316. The active-site Proton acceptor is aspartate 316.

It belongs to the carbohydrate kinase PfkB family. Monomer. Requires Mg(2+) as cofactor. In terms of tissue distribution, widely expressed. Highly expressed in liver, testis, kidney and spleen (at protein level). In brain, expression in most forebrain structures and the cerebellum is higher than in the midbrain and brainstem (at protein level). As to expression, major isoform in testis and kidney. Not detected in most brain regions, except in the cerebellum, where it is expressed at a similar level to that of isoform 2 (at protein level). Major isoform in spleen and in most brain regions, except in the cerebellum, where it is expressed at a similar level to that of isoform 1 (at protein level).

The protein resides in the nucleus. Its subcellular location is the cytoplasm. The catalysed reaction is adenosine + ATP = AMP + ADP + H(+). The protein operates within purine metabolism; AMP biosynthesis via salvage pathway; AMP from adenosine: step 1/1. Its activity is regulated as follows. Activity is inhibited by 5-iodotubercidin and 5'-amino-5'-deoxyadenosine. Catalyzes the phosphorylation of the purine nucleoside adenosine at the 5' position in an ATP-dependent manner. Serves as a potential regulator of concentrations of extracellular adenosine and intracellular adenine nucleotides. The polypeptide is Adenosine kinase (Adk) (Mus musculus (Mouse)).